The sequence spans 116 residues: MRHRCKVPQLGLPADQRKALLRSLATQLILHGQITTTLAKAKAVRAEVDHIITLAKDGSLSARRQAMGYIYDKQLVHALFEGAQARYGNRNGGYTRVVRTLRRRGDNAPMAIIELM.

It belongs to the bacterial ribosomal protein bL17 family. Part of the 50S ribosomal subunit. Contacts protein L32.

The sequence is that of Large ribosomal subunit protein bL17 from Microcystis aeruginosa (strain NIES-843 / IAM M-2473).